Consider the following 365-residue polypeptide: MNTLGRFLRLTTFGESHGDVIGGVLDGMPSGIKIDYALLENEMKRRQGGRNVFTTPRKEDDKVEITSGVFEDFSTGTPIGFLIHNQRARSKDYDNIKNLFRPSHADFTYFHKYGIRDFRGGGRSSARESAIRVAAGAFAKMLLKEIGIVCESGIIKIGGIEAKNYDFNHALKSEIFALDEEQEEAQKTAIQNAIKNHDSIGGVALIRARSIKTNQKLPIGLGQGLYAKLDAKIAEAMMGLNGVKAVEIGKGVESSLLKGSEYNDLMNQKGFLSNHSGGVLGGMSNGEEIIVKAHFKPTPSIFQPQQTIDINNNECECLLKGRHDPCIAIRGSVVCESLLSLVLADMVLLNLTSKIEYLKTIYNEN.

Position 46 (arginine 46) interacts with NADP(+). FMN contacts are provided by residues 123–125, 241–242, glycine 281, 296–300, and arginine 322; these read RSS, NG, and KPTPS.

The protein belongs to the chorismate synthase family. As to quaternary structure, homotetramer. The cofactor is FMNH2.

It carries out the reaction 5-O-(1-carboxyvinyl)-3-phosphoshikimate = chorismate + phosphate. It participates in metabolic intermediate biosynthesis; chorismate biosynthesis; chorismate from D-erythrose 4-phosphate and phosphoenolpyruvate: step 7/7. Functionally, catalyzes the anti-1,4-elimination of the C-3 phosphate and the C-6 proR hydrogen from 5-enolpyruvylshikimate-3-phosphate (EPSP) to yield chorismate, which is the branch point compound that serves as the starting substrate for the three terminal pathways of aromatic amino acid biosynthesis. This reaction introduces a second double bond into the aromatic ring system. The protein is Chorismate synthase of Helicobacter pylori (strain G27).